The following is a 458-amino-acid chain: ATP-dependent protease ATPase subunit HslU (458 aa).

ATP contacts are provided by residues valine 18, 60-65 (GVGKTE), aspartate 270, glutamate 335, and arginine 407.

The protein belongs to the ClpX chaperone family. HslU subfamily. As to quaternary structure, a double ring-shaped homohexamer of HslV is capped on each side by a ring-shaped HslU homohexamer. The assembly of the HslU/HslV complex is dependent on binding of ATP.

The protein localises to the cytoplasm. Its function is as follows. ATPase subunit of a proteasome-like degradation complex; this subunit has chaperone activity. The binding of ATP and its subsequent hydrolysis by HslU are essential for unfolding of protein substrates subsequently hydrolyzed by HslV. HslU recognizes the N-terminal part of its protein substrates and unfolds these before they are guided to HslV for hydrolysis. The chain is ATP-dependent protease ATPase subunit HslU from Desulfitobacterium hafniense (strain DSM 10664 / DCB-2).